A 359-amino-acid chain; its full sequence is 4-hydroxy-3-methylbut-2-en-1-yl diphosphate synthase (flavodoxin) (359 aa).

Residues Cys264, Cys267, Cys299, and Glu306 each contribute to the [4Fe-4S] cluster site.

This sequence belongs to the IspG family. It depends on [4Fe-4S] cluster as a cofactor.

The catalysed reaction is (2E)-4-hydroxy-3-methylbut-2-enyl diphosphate + oxidized [flavodoxin] + H2O + 2 H(+) = 2-C-methyl-D-erythritol 2,4-cyclic diphosphate + reduced [flavodoxin]. Its pathway is isoprenoid biosynthesis; isopentenyl diphosphate biosynthesis via DXP pathway; isopentenyl diphosphate from 1-deoxy-D-xylulose 5-phosphate: step 5/6. Its function is as follows. Converts 2C-methyl-D-erythritol 2,4-cyclodiphosphate (ME-2,4cPP) into 1-hydroxy-2-methyl-2-(E)-butenyl 4-diphosphate. The protein is 4-hydroxy-3-methylbut-2-en-1-yl diphosphate synthase (flavodoxin) of Helicobacter pylori (strain HPAG1).